The primary structure comprises 126 residues: MSKVQEVLDIVKEMSVLELSELVEAMEEEFGVSAAAPAPAAAPAAGGDQGGAEAAEQTEFDVVLNDAGQKKIQVIKAVKEATGMGLKEAKALADELPKAVKEKVSKEEAEELKEKIEEAGGDVEIK.

Over residues 36-55 (APAPAAAPAAGGDQGGAEAA) the composition is skewed to low complexity. Positions 36-57 (APAPAAAPAAGGDQGGAEAAEQ) are disordered.

It belongs to the bacterial ribosomal protein bL12 family. As to quaternary structure, homodimer. Part of the ribosomal stalk of the 50S ribosomal subunit. Forms a multimeric L10(L12)X complex, where L10 forms an elongated spine to which 2 to 4 L12 dimers bind in a sequential fashion. Binds GTP-bound translation factors.

In terms of biological role, forms part of the ribosomal stalk which helps the ribosome interact with GTP-bound translation factors. Is thus essential for accurate translation. The chain is Large ribosomal subunit protein bL12 from Natranaerobius thermophilus (strain ATCC BAA-1301 / DSM 18059 / JW/NM-WN-LF).